We begin with the raw amino-acid sequence, 268 residues long: Interleukin-2 receptor subunit alpha (268 aa).

Residues 1–21 (MEPRLLMLGFLSLTIVPSCRA) form the signal peptide. Residues 22–79 (ELCLYDPPEVPNATFKALSYKNGTILNCECKRGFRRLKELVYMRCLGNSWSSNCQCTS) form the Sushi 1 domain. The Extracellular portion of the chain corresponds to 22-236 (ELCLYDPPEV…ETFVLTMEYK (215 aa)). Cystine bridges form between cysteine 24-cysteine 66, cysteine 49-cysteine 75, and cysteine 51-cysteine 77. N-linked (GlcNAc...) asparagine glycosylation is found at asparagine 33 and asparagine 43. The disordered stretch occupies residues 86 to 109 (RKQVTAQLEHQKEQQTTTDMQKPT). Residues 88-109 (QVTAQLEHQKEQQTTTDMQKPT) show a composition bias toward polar residues. An N-linked (GlcNAc...) asparagine glycan is attached at asparagine 116. The 64-residue stretch at 119–182 (GHCREPPPWK…WTQPQLTCVD (64 aa)) folds into the Sushi 2 domain. 2 cysteine pairs are disulfide-bonded: cysteine 121–cysteine 164 and cysteine 148–cysteine 180. Residues 189 to 219 (FLASEESQGSRNSSPESETSCPITTTDFPQP) are disordered. Over residues 193 to 211 (EESQGSRNSSPESETSCPI) the composition is skewed to polar residues. Residues 237–257 (VAVASCLFLLISILLLSGLTW) traverse the membrane as a helical segment. Residues 258–268 (QHRWRKSRRTI) are Cytoplasmic-facing.

As to quaternary structure, non-covalent dimer of an alpha and a beta subunit. IL2R exists in 3 different forms: a high affinity dimer, an intermediate affinity monomer (beta subunit), and a low affinity monomer (alpha subunit). The high and intermediate affinity forms also associate with a gamma subunit.

It is found in the membrane. Its function is as follows. Receptor for interleukin-2. The receptor is involved in the regulation of immune tolerance by controlling regulatory T cells (TREGs) activity. TREGs suppress the activation and expansion of autoreactive T-cells. This is Interleukin-2 receptor subunit alpha (Il2ra) from Mus musculus (Mouse).